Here is a 550-residue protein sequence, read N- to C-terminus: Luciferin 4-monooxygenase (550 aa).

A Microbody targeting signal motif is present at residues 548–550 (SKL).

This sequence belongs to the ATP-dependent AMP-binding enzyme family. Mg(2+) is required as a cofactor.

Its subcellular location is the peroxisome. The enzyme catalyses firefly D-luciferin + ATP + O2 = firefly oxyluciferin + hnu + AMP + CO2 + diphosphate. In terms of biological role, produces green light with a wavelength of 562 nm. The sequence is that of Luciferin 4-monooxygenase from Photinus pyralis (Common eastern firefly).